A 457-amino-acid chain; its full sequence is Phosphoglucosamine mutase (457 aa).

Residue serine 109 is the Phosphoserine intermediate of the active site. Residues serine 109, aspartate 251, aspartate 253, and aspartate 255 each contribute to the Mg(2+) site. Serine 109 is modified (phosphoserine).

This sequence belongs to the phosphohexose mutase family. It depends on Mg(2+) as a cofactor. Activated by phosphorylation.

It carries out the reaction alpha-D-glucosamine 1-phosphate = D-glucosamine 6-phosphate. Catalyzes the conversion of glucosamine-6-phosphate to glucosamine-1-phosphate. The sequence is that of Phosphoglucosamine mutase from Bdellovibrio bacteriovorus (strain ATCC 15356 / DSM 50701 / NCIMB 9529 / HD100).